A 505-amino-acid chain; its full sequence is Deoxyguanosinetriphosphate triphosphohydrolase (505 aa).

The 208-residue stretch at R66–C273 folds into the HD domain.

Belongs to the dGTPase family. Type 1 subfamily. As to quaternary structure, homotetramer. It depends on Mg(2+) as a cofactor.

It catalyses the reaction dGTP + H2O = 2'-deoxyguanosine + triphosphate + H(+). Functionally, dGTPase preferentially hydrolyzes dGTP over the other canonical NTPs. In Salmonella typhimurium (strain LT2 / SGSC1412 / ATCC 700720), this protein is Deoxyguanosinetriphosphate triphosphohydrolase.